The primary structure comprises 916 residues: Internalin J (916 aa).

A signal peptide spans 1–25 (MKTSKIIIASLVSLTLVSNPILTFA). 14 LRR repeats span residues 94–115 (TLTSLDCHNSSIADMTGIEKLT), 116–136 (GLTKLICTYNNITTLDLSQNT), 137–157 (NLTYLACDSNKLTNLDVTPLT), 158–179 (KLTYLNCDTNKLTKIDVSQNPL), 180–200 (LTYLNCARNTLTEIDVSHNTQ), 201–221 (LTELDCHLNKKITKLDVTPQT), 222–243 (QLTTLDCSFNKITALDVSQNKL), 244–263 (LNRLNCDTNNITKLDLNQNI), 264–284 (QLTFLNCSSNKLTEIDVTPLT), 285–306 (QLTYFDCSVNPLTELDVSTLSK), 316–325 (DLLEIDLTHN), 338–357 (KIKELDVTHNTQLYLLDCQA), 359–368 (GITELDLSQN), and 380–402 (ELTKLDVSHNTKLKSLSCVNAHI). 5 MucBP domains span residues 506-568 (PIKG…SQSV), 576-638 (IVAA…SQTV), 646-708 (IVAA…AQTV), 717-779 (APEK…SQTV), and 787-849 (IVAA…AQTV). Residues 862 to 888 (PLPDKKTTKPSNLKTTEVKKASDTLPK) form a disordered region. The LPXTG sorting signal signature appears at 886-890 (LPKTG). Thr889 bears the Pentaglycyl murein peptidoglycan amidated threonine mark. The propeptide at 890–916 (GDSTPWKSALLGVFLSSTALVIWKKKK) is removed by sortase.

This sequence belongs to the internalin family.

The protein resides in the secreted. It localises to the cell wall. Its function is as follows. Involved in several steps of L.monocytogenes infection, probably improves adhesin to host cells. This Listeria monocytogenes serotype 4b (strain F2365) protein is Internalin J (inlJ).